Consider the following 322-residue polypeptide: Adenine deaminase (322 aa).

Zn(2+)-binding residues include H11, H13, and H189. The active-site Proton donor is the E192. Residue D270 coordinates Zn(2+). D271 serves as a coordination point for substrate.

The protein belongs to the metallo-dependent hydrolases superfamily. Adenosine and AMP deaminases family. Adenine deaminase type 2 subfamily. It depends on Zn(2+) as a cofactor.

It carries out the reaction adenine + H2O + H(+) = hypoxanthine + NH4(+). Its function is as follows. Catalyzes the hydrolytic deamination of adenine to hypoxanthine. Plays an important role in the purine salvage pathway and in nitrogen catabolism. The chain is Adenine deaminase from Rhizobium rhizogenes (strain K84 / ATCC BAA-868) (Agrobacterium radiobacter).